Here is a 294-residue protein sequence, read N- to C-terminus: Deubiquitinase OTUD6B (294 aa).

The tract at residues 85–120 is disordered; it reads VTSLDLGSEEPVQQPRVSKAQKRREKKAAQEKERDD. The segment covering 111–120 has biased composition (basic and acidic residues); it reads KAAQEKERDD. The region spanning 150–287 is the OTU domain; sequence LQIRQIPSDG…GEHYNSVEQL (138 aa). Positions 155–161 are cys-loop; it reads IPSDGHC. Residue aspartate 158 is part of the active site. Catalysis depends on cysteine 161, which acts as the Nucleophile. Residues 222-232 are variable-loop; the sequence is IVNTPAWGGQL. The his-loop stretch occupies residues 270–280; it reads YMRHAYGLGEH. Histidine 280 is an active-site residue.

It carries out the reaction Thiol-dependent hydrolysis of ester, thioester, amide, peptide and isopeptide bonds formed by the C-terminal Gly of ubiquitin (a 76-residue protein attached to proteins as an intracellular targeting signal).. Functionally, deubiquitinating enzyme that may play a role in the ubiquitin-dependent regulation of different cellular processes. The sequence is that of Deubiquitinase OTUD6B (otud6b) from Xenopus laevis (African clawed frog).